Reading from the N-terminus, the 182-residue chain is Peptidyl-tRNA hydrolase (182 aa).

Residue Y14 coordinates tRNA. The active-site Proton acceptor is H19. Residues Y65, N67, and N113 each contribute to the tRNA site.

It belongs to the PTH family. Monomer.

Its subcellular location is the cytoplasm. The enzyme catalyses an N-acyl-L-alpha-aminoacyl-tRNA + H2O = an N-acyl-L-amino acid + a tRNA + H(+). In terms of biological role, hydrolyzes ribosome-free peptidyl-tRNAs (with 1 or more amino acids incorporated), which drop off the ribosome during protein synthesis, or as a result of ribosome stalling. Catalyzes the release of premature peptidyl moieties from peptidyl-tRNA molecules trapped in stalled 50S ribosomal subunits, and thus maintains levels of free tRNAs and 50S ribosomes. The sequence is that of Peptidyl-tRNA hydrolase from Rickettsia peacockii (strain Rustic).